The sequence spans 517 residues: ATP synthase subunit alpha (517 aa).

175-182 provides a ligand contact to ATP; that stretch reads GDRQTGKT.

Belongs to the ATPase alpha/beta chains family. As to quaternary structure, F-type ATPases have 2 components, CF(1) - the catalytic core - and CF(0) - the membrane proton channel. CF(1) has five subunits: alpha(3), beta(3), gamma(1), delta(1), epsilon(1). CF(0) has three main subunits: a(1), b(2) and c(9-12). The alpha and beta chains form an alternating ring which encloses part of the gamma chain. CF(1) is attached to CF(0) by a central stalk formed by the gamma and epsilon chains, while a peripheral stalk is formed by the delta and b chains.

It localises to the cell membrane. The enzyme catalyses ATP + H2O + 4 H(+)(in) = ADP + phosphate + 5 H(+)(out). In terms of biological role, produces ATP from ADP in the presence of a proton gradient across the membrane. The alpha chain is a regulatory subunit. The protein is ATP synthase subunit alpha of Herpetosiphon aurantiacus (strain ATCC 23779 / DSM 785 / 114-95).